The primary structure comprises 257 residues: Flavodoxin/ferredoxin--NADP reductase (257 aa).

The region spanning 2-110 (NPWINANVLK…EKSFGFFTLD (109 aa)) is the FAD-binding FR-type domain. Residues 59–62 (RAYS), Tyr75, 83–85 (KLS), and Thr125 contribute to the FAD site. Residues 152–153 (VR), 182–183 (SR), Arg193, 223–225 (NPA), and Asp229 each bind NADP(+). FAD is bound at residue 256–257 (YW).

This sequence belongs to the ferredoxin--NADP reductase type 1 family. It depends on FAD as a cofactor.

It localises to the cytoplasm. It catalyses the reaction 2 reduced [2Fe-2S]-[ferredoxin] + NADP(+) + H(+) = 2 oxidized [2Fe-2S]-[ferredoxin] + NADPH. The enzyme catalyses reduced [flavodoxin] + NADP(+) = oxidized [flavodoxin] + NADPH + 2 H(+). Functionally, transports electrons between flavodoxin or ferredoxin and NADPH. The chain is Flavodoxin/ferredoxin--NADP reductase (fpr) from Buchnera aphidicola subsp. Schizaphis graminum (strain Sg).